The chain runs to 933 residues: Collagen alpha-2(I) chain (933 aa).

A compositionally biased stretch (gly residues) spans S1–G16. 2 disordered regions span residues S1–A191 and L206–R933. Over residues L17–A53 the composition is skewed to low complexity. 4-hydroxyproline is present on residues P24 and P30. A compositionally biased stretch (basic and acidic residues) spans K57–E72. K94 carries the post-translational modification 5-hydroxylysine; alternate. An O-linked (Gal...) hydroxylysine; alternate glycan is attached at K94. Composition is skewed to low complexity over residues V108 to P137, A162 to P176, and P213 to V228. Residues G280–G289 show a composition bias toward gly residues. Residues P317 and P320 each carry the 4-hydroxyproline modification. The span at G413–G422 shows a compositional bias: gly residues. 2 stretches are compositionally biased toward low complexity: residues P468–P485 and E497–A507. Positions G508–G517 are enriched in gly residues. Low complexity-rich tracts occupy residues V540–S584, V591–A611, and P627–N640. A compositionally biased stretch (gly residues) spans G644–G656. A compositionally biased stretch (low complexity) spans L657–T667. Residues G704–G713 are compositionally biased toward gly residues. Composition is skewed to low complexity over residues S721–P748 and L756–S781. The segment covering A795 to R807 has biased composition (basic and acidic residues). Low complexity-rich tracts occupy residues Y809–A831 and P840–P860. Over residues R864–P874 the composition is skewed to basic and acidic residues.

Belongs to the fibrillar collagen family. In terms of assembly, trimers of one alpha 2(I) and two alpha 1(I) chains. Interacts (via C-terminus) with TMEM131 (via PapD-L domain); the interaction is direct and is involved in assembly and TRAPPIII ER-to-Golgi transport complex-dependent secretion of collagen. In terms of processing, prolines at the third position of the tripeptide repeating unit (G-X-Y) are hydroxylated in some or all of the chains. In terms of tissue distribution, expressed in bones.

The protein resides in the secreted. It is found in the extracellular space. It localises to the extracellular matrix. Functionally, type I collagen is a member of group I collagen (fibrillar forming collagen). In Glyptodon sp. (strain SLP-2019) (Giant armadillo), this protein is Collagen alpha-2(I) chain.